A 424-amino-acid polypeptide reads, in one-letter code: MTAIIDIHGREILDSRGNPTVEVDVLLEDGSFGRAAVPSGASTGAHEAVELRDGDKGRYLGKGVTKAVAAVNGDIAEALVGLDAEDQREIDMAMIDLDGTPNKSRLGANAILGVSLAAAKAAADARGLPLYRYVGGVSARTLPVPMMNIINGGEHADNPIDVQEFMIMPVGAGSIAEAVRWGSEIFHTLKKGLSQKGLATAVGDEGGFAPNLASTRDALDFIAASVDQAGFKLGTDVVLALDCAATEFFRNGKYEISGEGLSLSPEQMAEYLAALVKDYPIKSIEDGMSEDDFAGWKALTDLIGGTCQLVGDDLFVTNPARLEQGIKDGLANSLLVKVNQIGTLSETLDAVDMAHRARYSAVMSHRSGETEDATIADLAVATNCGQIKTGSLARSDRLAKYNQLIRIEEELGDMARYPGAAIFG.

A (2R)-2-phosphoglycerate-binding site is contributed by Gln-163. Glu-205 acts as the Proton donor in catalysis. Mg(2+) is bound by residues Asp-242, Glu-285, and Asp-312. Residues Lys-337, Arg-366, Ser-367, and Lys-388 each coordinate (2R)-2-phosphoglycerate. Lys-337 functions as the Proton acceptor in the catalytic mechanism.

The protein belongs to the enolase family. It depends on Mg(2+) as a cofactor.

The protein localises to the cytoplasm. The protein resides in the secreted. It is found in the cell surface. The enzyme catalyses (2R)-2-phosphoglycerate = phosphoenolpyruvate + H2O. It participates in carbohydrate degradation; glycolysis; pyruvate from D-glyceraldehyde 3-phosphate: step 4/5. Catalyzes the reversible conversion of 2-phosphoglycerate (2-PG) into phosphoenolpyruvate (PEP). It is essential for the degradation of carbohydrates via glycolysis. This is Enolase from Sphingopyxis alaskensis (strain DSM 13593 / LMG 18877 / RB2256) (Sphingomonas alaskensis).